The primary structure comprises 215 residues: Oligoribonuclease (215 aa).

One can recognise an Exonuclease domain in the interval leucine 5–leucine 170. Tyrosine 127 is a catalytic residue. A disordered region spans residues leucine 196 to glycine 215.

The protein belongs to the oligoribonuclease family.

Its subcellular location is the cytoplasm. Functionally, 3'-to-5' exoribonuclease specific for small oligoribonucleotides. The chain is Oligoribonuclease from Mycobacterium sp. (strain JLS).